The chain runs to 425 residues: Histidine--tRNA ligase (425 aa).

It belongs to the class-II aminoacyl-tRNA synthetase family. As to quaternary structure, homodimer.

The protein localises to the cytoplasm. The catalysed reaction is tRNA(His) + L-histidine + ATP = L-histidyl-tRNA(His) + AMP + diphosphate + H(+). The protein is Histidine--tRNA ligase of Shewanella oneidensis (strain ATCC 700550 / JCM 31522 / CIP 106686 / LMG 19005 / NCIMB 14063 / MR-1).